The following is a 370-amino-acid chain: UDP-N-acetylglucosamine--N-acetylmuramyl-(pentapeptide) pyrophosphoryl-undecaprenol N-acetylglucosamine transferase (370 aa).

UDP-N-acetyl-alpha-D-glucosamine contacts are provided by residues 10 to 12 (TGG), N126, S200, I255, and Q300.

Belongs to the glycosyltransferase 28 family. MurG subfamily.

Its subcellular location is the cell membrane. It carries out the reaction Mur2Ac(oyl-L-Ala-gamma-D-Glu-L-Lys-D-Ala-D-Ala)-di-trans,octa-cis-undecaprenyl diphosphate + UDP-N-acetyl-alpha-D-glucosamine = beta-D-GlcNAc-(1-&gt;4)-Mur2Ac(oyl-L-Ala-gamma-D-Glu-L-Lys-D-Ala-D-Ala)-di-trans,octa-cis-undecaprenyl diphosphate + UDP + H(+). Its pathway is cell wall biogenesis; peptidoglycan biosynthesis. Its function is as follows. Cell wall formation. Catalyzes the transfer of a GlcNAc subunit on undecaprenyl-pyrophosphoryl-MurNAc-pentapeptide (lipid intermediate I) to form undecaprenyl-pyrophosphoryl-MurNAc-(pentapeptide)GlcNAc (lipid intermediate II). The protein is UDP-N-acetylglucosamine--N-acetylmuramyl-(pentapeptide) pyrophosphoryl-undecaprenol N-acetylglucosamine transferase of Lactobacillus johnsonii (strain CNCM I-12250 / La1 / NCC 533).